The following is a 159-amino-acid chain: Putative transcriptional regulatory protein rrnAC0199 (159 aa).

The protein belongs to the Tfx family.

Its function is as follows. Putative transcriptional regulator. In Haloarcula marismortui (strain ATCC 43049 / DSM 3752 / JCM 8966 / VKM B-1809) (Halobacterium marismortui), this protein is Putative transcriptional regulatory protein rrnAC0199.